The following is a 162-amino-acid chain: Peroxiredoxin-2C (162 aa).

The region spanning 4 to 162 is the Thioredoxin domain; sequence ITVGDVVPDG…SSAEDILKAL (159 aa). Cys51 functions as the Cysteine sulfenic acid (-SOH) intermediate in the catalytic mechanism.

This sequence belongs to the peroxiredoxin family. Prx5 subfamily. As to quaternary structure, monomer. Highly expressed in buds and flowers. Slightly expressed in green tissues. Also detected in pollen.

It localises to the cytoplasm. It catalyses the reaction [glutaredoxin]-dithiol + a hydroperoxide = [glutaredoxin]-disulfide + an alcohol + H2O. Thiol-specific peroxidase that catalyzes the reduction of hydrogen peroxide and organic hydroperoxides to water and alcohols, respectively. Plays a role in cell protection against oxidative stress by detoxifying peroxides and as sensor of hydrogen peroxide-mediated signaling events. The polypeptide is Peroxiredoxin-2C (PRXIIC) (Arabidopsis thaliana (Mouse-ear cress)).